Consider the following 290-residue polypeptide: Acetylglutamate kinase (290 aa).

Substrate is bound by residues 72-73 (GG), Arg94, and Asn187.

Belongs to the acetylglutamate kinase family. ArgB subfamily.

The protein resides in the plastid. The protein localises to the chloroplast. The catalysed reaction is N-acetyl-L-glutamate + ATP = N-acetyl-L-glutamyl 5-phosphate + ADP. The protein operates within amino-acid biosynthesis; L-arginine biosynthesis; N(2)-acetyl-L-ornithine from L-glutamate: step 2/4. Functionally, catalyzes the ATP-dependent phosphorylation of N-acetyl-L-glutamate. The chain is Acetylglutamate kinase from Cyanidioschyzon merolae (strain NIES-3377 / 10D) (Unicellular red alga).